A 376-amino-acid polypeptide reads, in one-letter code: UDP-N-acetylglucosamine--N-acetylmuramyl-(pentapeptide) pyrophosphoryl-undecaprenol N-acetylglucosamine transferase (376 aa).

Residues Thr11–Gly13, Asn117, Arg160, Ser208, and Gln310 contribute to the UDP-N-acetyl-alpha-D-glucosamine site.

Belongs to the glycosyltransferase 28 family. MurG subfamily.

The protein resides in the cell inner membrane. The enzyme catalyses di-trans,octa-cis-undecaprenyl diphospho-N-acetyl-alpha-D-muramoyl-L-alanyl-D-glutamyl-meso-2,6-diaminopimeloyl-D-alanyl-D-alanine + UDP-N-acetyl-alpha-D-glucosamine = di-trans,octa-cis-undecaprenyl diphospho-[N-acetyl-alpha-D-glucosaminyl-(1-&gt;4)]-N-acetyl-alpha-D-muramoyl-L-alanyl-D-glutamyl-meso-2,6-diaminopimeloyl-D-alanyl-D-alanine + UDP + H(+). Its pathway is cell wall biogenesis; peptidoglycan biosynthesis. Cell wall formation. Catalyzes the transfer of a GlcNAc subunit on undecaprenyl-pyrophosphoryl-MurNAc-pentapeptide (lipid intermediate I) to form undecaprenyl-pyrophosphoryl-MurNAc-(pentapeptide)GlcNAc (lipid intermediate II). The polypeptide is UDP-N-acetylglucosamine--N-acetylmuramyl-(pentapeptide) pyrophosphoryl-undecaprenol N-acetylglucosamine transferase (Rickettsia peacockii (strain Rustic)).